Here is a 505-residue protein sequence, read N- to C-terminus: Kinesin light chain 3 (505 aa).

The disordered stretch occupies residues 1–20; it reads MSVQVAAPGGLGLGLERPSP. The stretch at 88–150 forms a coiled coil; the sequence is LLALSAHVGA…EEEKSHLEFL (63 aa). Residues 157–193 are disordered; sequence DPPAESQQPESPPRRDSLASLFPSEEEERRGPEAVGA. Phosphoserine is present on S173. 5 TPR repeats span residues 207-240, 249-282, 291-324, 333-366, and 375-408; these read LRTLHNLVIQYAGQGRYEVAVPLCRQALEDLERS, ATMLNILALVYRDQNKYKEATDLLHDALQIREQT, AATLNNLAVLYGKRGRYREAEPLCQRALEIREKV, AKQLNNLALLCQNQGKFEEVERHYARALSIYEAL, and AKTKNNLASAYLKQNKYQQAEELYKEILHREALP. The segment at 409–505 is disordered; that stretch reads APLGAPNTGT…STSTQDLGPR (97 aa). A compositionally biased stretch (low complexity) spans 416–434; the sequence is TGTTSDTQQQTLSRSSSFS. Residues 435–453 show a composition bias toward basic and acidic residues; sequence KLRESIRRGSEKLVSRLRG. S467 carries the phosphoserine modification. Residues 489-505 are compositionally biased toward polar residues; that stretch reads SEASRTLSTSTQDLGPR. T499 bears the Phosphothreonine mark.

It belongs to the kinesin light chain family. As to quaternary structure, oligomer composed of two heavy chains and two light chains. Associates with microtubulin in an ATP-dependent manner. Interacts with KIF5C. Interacts with ODF1. Interacts with LRGUK. Interacts with VDAC2.

It is found in the cytoplasm. The protein localises to the cytoskeleton. The protein resides in the mitochondrion. Its function is as follows. Kinesin is a microtubule-associated force-producing protein that may play a role in organelle transport. Plays a role during spermiogenesis in the development of the sperm tail midpiece and in the normal function of spermatozoa. May play a role in the formation of the mitochondrial sheath formation in the developing spermatid midpiece. This chain is Kinesin light chain 3 (KLC3), found in Bos taurus (Bovine).